The following is a 166-amino-acid chain: Cyanate hydratase (166 aa).

Residues R92, E95, and S118 contribute to the active site.

It belongs to the cyanase family.

The enzyme catalyses cyanate + hydrogencarbonate + 3 H(+) = NH4(+) + 2 CO2. In terms of biological role, catalyzes the reaction of cyanate with bicarbonate to produce ammonia and carbon dioxide. This Sorghum bicolor (Sorghum) protein is Cyanate hydratase.